The chain runs to 269 residues: MPGVETIKSSWADEVELDYGGLPPTTETIENGHKYVTEYKYNKDDKKTKVVRTYKISKQVVPKTVAKRRTWTKFGDSKNDKPGPNSQTTMVSEEIIMQFLNSKEDEKANDPLLDPTKNIAKCRICNGEHWSVNCPYKGTAMDTNLMEKKAAAAASAAVDAPKSGKYVPPFLKDSQKGGMGMRGRDDTAAIRISNLSESMTEADLEELVKKIGPQSKMYLARDKNTGLCKGFAYVHFKQRKDAAAAIEILNGHGYDHLILSVEWSKPQNN.

An RRM domain is found at 188-266 (AAIRISNLSE…LILSVEWSKP (79 aa)).

The protein belongs to the eIF-3 subunit G family. In terms of assembly, component of the eukaryotic translation initiation factor 3 (eIF-3) complex. The eIF-3 complex interacts with pix.

It localises to the cytoplasm. Functionally, RNA-binding component of the eukaryotic translation initiation factor 3 (eIF-3) complex, which is involved in protein synthesis of a specialized repertoire of mRNAs and, together with other initiation factors, stimulates binding of mRNA and methionyl-tRNAi to the 40S ribosome. The eIF-3 complex specifically targets and initiates translation of a subset of mRNAs involved in cell proliferation. This subunit can bind 18S rRNA. The sequence is that of Eukaryotic translation initiation factor 3 subunit G-1 from Drosophila mojavensis (Fruit fly).